A 362-amino-acid chain; its full sequence is Phospho-N-acetylmuramoyl-pentapeptide-transferase (362 aa).

10 helical membrane passes run 28–48 (GATVTALLISFLFGPRIIALL), 73–93 (TPTMGGFLILVGLVPSVLLWA), 100–120 (VWIVLFVTLGFGAVGFADDYL), 134–154 (VKLFFEFVIALIAMWALVLVS), 169–189 (TLLIELGGFFFLFGALVIVGS), 201–221 (GLAIVPVMIAAASLGLIVYLV), 241–261 (LAVFCGALIGAGLGFLWYNAP), 264–284 (MVFMGDTGSLALGGALGAIAV), 290–310 (LVLAIIGGLFVLEAVSVIVQV), and 339–359 (TVVVRFWIISVVLAMAGLATL).

This sequence belongs to the glycosyltransferase 4 family. MraY subfamily. Requires Mg(2+) as cofactor.

The protein localises to the cell inner membrane. It carries out the reaction UDP-N-acetyl-alpha-D-muramoyl-L-alanyl-gamma-D-glutamyl-meso-2,6-diaminopimeloyl-D-alanyl-D-alanine + di-trans,octa-cis-undecaprenyl phosphate = di-trans,octa-cis-undecaprenyl diphospho-N-acetyl-alpha-D-muramoyl-L-alanyl-D-glutamyl-meso-2,6-diaminopimeloyl-D-alanyl-D-alanine + UMP. Its pathway is cell wall biogenesis; peptidoglycan biosynthesis. Catalyzes the initial step of the lipid cycle reactions in the biosynthesis of the cell wall peptidoglycan: transfers peptidoglycan precursor phospho-MurNAc-pentapeptide from UDP-MurNAc-pentapeptide onto the lipid carrier undecaprenyl phosphate, yielding undecaprenyl-pyrophosphoryl-MurNAc-pentapeptide, known as lipid I. In Parvibaculum lavamentivorans (strain DS-1 / DSM 13023 / NCIMB 13966), this protein is Phospho-N-acetylmuramoyl-pentapeptide-transferase.